The primary structure comprises 190 residues: UPF0316 protein Mboo_0605 (190 aa).

Transmembrane regions (helical) follow at residues 3–23, 41–61, and 67–87; these read IGTF…RIAE, LAAY…GLVL, and FWNL…GMEI.

Belongs to the UPF0316 family.

The protein resides in the cell membrane. In Methanoregula boonei (strain DSM 21154 / JCM 14090 / 6A8), this protein is UPF0316 protein Mboo_0605.